A 263-amino-acid polypeptide reads, in one-letter code: 3-deoxy-manno-octulosonate cytidylyltransferase (263 aa).

Belongs to the KdsB family.

The protein resides in the cytoplasm. It catalyses the reaction 3-deoxy-alpha-D-manno-oct-2-ulosonate + CTP = CMP-3-deoxy-beta-D-manno-octulosonate + diphosphate. The protein operates within nucleotide-sugar biosynthesis; CMP-3-deoxy-D-manno-octulosonate biosynthesis; CMP-3-deoxy-D-manno-octulosonate from 3-deoxy-D-manno-octulosonate and CTP: step 1/1. It participates in bacterial outer membrane biogenesis; lipopolysaccharide biosynthesis. Its function is as follows. Activates KDO (a required 8-carbon sugar) for incorporation into bacterial lipopolysaccharide in Gram-negative bacteria. This chain is 3-deoxy-manno-octulosonate cytidylyltransferase, found in Burkholderia thailandensis (strain ATCC 700388 / DSM 13276 / CCUG 48851 / CIP 106301 / E264).